We begin with the raw amino-acid sequence, 224 residues long: Cerebellin-2 (224 aa).

A signal peptide spans 1–51 (MQAPGRGPLGLRLMMPGRRGALREPGGCGSCLGVALALLLLLLPACCPVRA). 2 N-linked (GlcNAc...) asparagine glycosylation sites follow: Asn53 and Asn110. Residues 88–224 (SGSAKVAFSA…TFSGFLVFPL (137 aa)) enclose the C1q domain.

As to quaternary structure, homohexamer; disulfide-linked homotrimers. The trimers are assembled via the globular C1q domains. The trimers associate via N-terminal cysteine residues to form disulfide-linked hexamers. May form homooligomers or heterooligomers with CBLN1 and CBLN3 prior to secretion. Once secreted, does not interact with other CBLN family members. Interacts with GRID2, and more weakly with GRID1. Interacts with NRXN1 and NRXN2 long and short isoforms produced by alternative promoter usage. Weakly interacts with NRXN3 short isoform and not at all with NRXN3 long isoform.

The protein resides in the secreted. In terms of biological role, acts as a synaptic organizer in specific subsets of neurons in the brain. Essential for long-term maintenance but not establishment of excitatory synapses. Functions as part of a trans-synaptic complex by binding to postsynaptic GRID1 and presynaptic neurexins. This interaction helps regulate the activity of NMDA and AMPA receptors at hippocampal synapses without affecting synapse formation. NRXN1B-CBLN2-GRID1 complex transduce presynaptic signals into postsynaptic NMDAR response. NRXN3B-CBLN2-GRID1 complex transduce presynaptic signals into postsynaptic AMPAR response. In Homo sapiens (Human), this protein is Cerebellin-2.